A 389-amino-acid polypeptide reads, in one-letter code: 1-deoxy-D-xylulose 5-phosphate reductoisomerase (389 aa).

Residues S11, G12, S13, V14, N39, and N122 each contribute to the NADPH site. K123 serves as a coordination point for 1-deoxy-D-xylulose 5-phosphate. E124 serves as a coordination point for NADPH. A Mn(2+)-binding site is contributed by D148. 4 residues coordinate 1-deoxy-D-xylulose 5-phosphate: S149, E150, S174, and H197. A Mn(2+)-binding site is contributed by E150. Residue G203 participates in NADPH binding. Residues S210, N215, K216, and E219 each contribute to the 1-deoxy-D-xylulose 5-phosphate site. E219 provides a ligand contact to Mn(2+).

It belongs to the DXR family. Mg(2+) serves as cofactor. Requires Mn(2+) as cofactor.

It catalyses the reaction 2-C-methyl-D-erythritol 4-phosphate + NADP(+) = 1-deoxy-D-xylulose 5-phosphate + NADPH + H(+). The protein operates within isoprenoid biosynthesis; isopentenyl diphosphate biosynthesis via DXP pathway; isopentenyl diphosphate from 1-deoxy-D-xylulose 5-phosphate: step 1/6. Functionally, catalyzes the NADPH-dependent rearrangement and reduction of 1-deoxy-D-xylulose-5-phosphate (DXP) to 2-C-methyl-D-erythritol 4-phosphate (MEP). The chain is 1-deoxy-D-xylulose 5-phosphate reductoisomerase from Leptospira interrogans serogroup Icterohaemorrhagiae serovar copenhageni (strain Fiocruz L1-130).